A 550-amino-acid chain; its full sequence is Chaperonin GroEL (550 aa).

ATP contacts are provided by residues 30 to 33 (TLGP), K51, 87 to 91 (DGTTT), G415, and D495.

It belongs to the chaperonin (HSP60) family. Forms a cylinder of 14 subunits composed of two heptameric rings stacked back-to-back. Interacts with the co-chaperonin GroES.

The protein resides in the cytoplasm. It carries out the reaction ATP + H2O + a folded polypeptide = ADP + phosphate + an unfolded polypeptide.. Together with its co-chaperonin GroES, plays an essential role in assisting protein folding. The GroEL-GroES system forms a nano-cage that allows encapsulation of the non-native substrate proteins and provides a physical environment optimized to promote and accelerate protein folding. This Shewanella woodyi (strain ATCC 51908 / MS32) protein is Chaperonin GroEL.